The sequence spans 119 residues: Large ribosomal subunit protein uL22c (119 aa).

Belongs to the universal ribosomal protein uL22 family. Part of the 50S ribosomal subunit.

It is found in the plastid. Its subcellular location is the chloroplast. Functionally, this protein binds specifically to 23S rRNA. Its function is as follows. The globular domain of the protein is located near the polypeptide exit tunnel on the outside of the subunit, while an extended beta-hairpin is found that lines the wall of the exit tunnel in the center of the 70S ribosome. In Chlorokybus atmophyticus (Soil alga), this protein is Large ribosomal subunit protein uL22c (rpl22).